Reading from the N-terminus, the 196-residue chain is Pyridoxal 5'-phosphate synthase subunit PdxT (196 aa).

47–49 serves as a coordination point for L-glutamine; sequence GES. Cys-79 functions as the Nucleophile in the catalytic mechanism. Residues Arg-106 and 134–135 each bind L-glutamine; that span reads IR. Residues His-170 and Glu-172 each act as charge relay system in the active site.

It belongs to the glutaminase PdxT/SNO family. In terms of assembly, in the presence of PdxS, forms a dodecamer of heterodimers. Only shows activity in the heterodimer.

The enzyme catalyses aldehydo-D-ribose 5-phosphate + D-glyceraldehyde 3-phosphate + L-glutamine = pyridoxal 5'-phosphate + L-glutamate + phosphate + 3 H2O + H(+). It catalyses the reaction L-glutamine + H2O = L-glutamate + NH4(+). Its pathway is cofactor biosynthesis; pyridoxal 5'-phosphate biosynthesis. Its function is as follows. Catalyzes the hydrolysis of glutamine to glutamate and ammonia as part of the biosynthesis of pyridoxal 5'-phosphate. The resulting ammonia molecule is channeled to the active site of PdxS. The sequence is that of Pyridoxal 5'-phosphate synthase subunit PdxT from Bacillus cytotoxicus (strain DSM 22905 / CIP 110041 / 391-98 / NVH 391-98).